Here is a 269-residue protein sequence, read N- to C-terminus: Chymotrypsin-like elastase family member 2A (269 aa).

The first 16 residues, 1-16 (MIRALLLSTLVAGALS), serve as a signal peptide directing secretion. Residues 17-28 (CGVPTYPPQLSR) constitute a propeptide, activation peptide. Positions 29 to 267 (VVGGEDARPN…YNDWISSVIE (239 aa)) constitute a Peptidase S1 domain. A disulfide bridge connects residues Cys58 and Cys74. Catalysis depends on charge relay system residues His73 and Asp121. Disulfide bonds link Cys155–Cys222, Cys186–Cys202, and Cys212–Cys243. The Charge relay system role is filled by Ser216.

It belongs to the peptidase S1 family. Elastase subfamily. As to quaternary structure, interacts with CPA1. Interacts with SERPINA1. Pancreas.

It is found in the secreted. The enzyme catalyses Preferential cleavage: Leu-|-Xaa, Met-|-Xaa and Phe-|-Xaa. Hydrolyzes elastin.. Its function is as follows. Elastase that enhances insulin signaling and might have a physiologic role in cellular glucose metabolism. Circulates in plasma and reduces platelet hyperactivation, triggers both insulin secretion and degradation, and increases insulin sensitivity. In Bos taurus (Bovine), this protein is Chymotrypsin-like elastase family member 2A (CELA2A).